Consider the following 518-residue polypeptide: MFS-type transporter cnsO (518 aa).

A compositionally biased stretch (polar residues) spans 1-13 (MESTDSSPPLSMT). Positions 1–24 (MESTDSSPPLSMTDTEKKGDAVTT) are disordered. Helical transmembrane passes span 99 to 119 (LALMYFFFTYGLSEPVSNIML), 122 to 142 (VGPKIWFPFIVCAWGLITTLT), 156 to 176 (LMLGITEAGLYPGAYFILSMW), 187 to 207 (AIFYGANTTAGAFGGVIAYGV), 221 to 241 (WLFLIEGCITIFAGLACLFCL), 298 to 318 (FMMMLFWWGGSVPTYSLSYTL), 334 to 354 (VMTTPPYIFATCVCVAVGYIS), 362 to 382 (LCIMGAYTLGLIGIIILWITV), and 392 to 412 (YFAIFLAAAGYSAQAPIVGAW). Asn416 carries an N-linked (GlcNAc...) asparagine glycan. The next 2 membrane-spanning stretches (helical) occupy residues 427-447 (IGLLMLLGSVGGGSIGSNIYI) and 455-475 (PLGFGFSVGATVLGAMIPATI).

Belongs to the major facilitator superfamily.

The protein localises to the cell membrane. Functionally, MFS-type transporter; part of the gene cluster that mediates the biosynthesis of communesins, a prominent class of indole alkaloids with great potential as pharmaceuticals. With the MFS transporter cnsL, is most likely responsible for cummunesins secretion and thereby may contribute to intrinsic resistance. The sequence is that of MFS-type transporter cnsO from Penicillium expansum (Blue mold rot fungus).